We begin with the raw amino-acid sequence, 122 residues long: Fluoride-specific ion channel FluC (122 aa).

4 consecutive transmembrane segments (helical) span residues 5–25 (FLIG…SGII), 29–49 (FGIP…VGFL), 65–85 (FIIT…YESF), and 93–113 (FIKS…MIYF). Residues Gly72 and Thr75 each contribute to the Na(+) site.

This sequence belongs to the fluoride channel Fluc/FEX (TC 1.A.43) family.

The protein localises to the cell membrane. It catalyses the reaction fluoride(in) = fluoride(out). With respect to regulation, na(+) is not transported, but it plays an essential structural role and its presence is essential for fluoride channel function. Fluoride-specific ion channel. Important for reducing fluoride concentration in the cell, thus reducing its toxicity. The sequence is that of Fluoride-specific ion channel FluC from Methanococcus vannielii (strain ATCC 35089 / DSM 1224 / JCM 13029 / OCM 148 / SB).